The sequence spans 226 residues: 2-C-methyl-D-erythritol 4-phosphate cytidylyltransferase (226 aa).

The protein belongs to the IspD/TarI cytidylyltransferase family. IspD subfamily.

It carries out the reaction 2-C-methyl-D-erythritol 4-phosphate + CTP + H(+) = 4-CDP-2-C-methyl-D-erythritol + diphosphate. It functions in the pathway isoprenoid biosynthesis; isopentenyl diphosphate biosynthesis via DXP pathway; isopentenyl diphosphate from 1-deoxy-D-xylulose 5-phosphate: step 2/6. Functionally, catalyzes the formation of 4-diphosphocytidyl-2-C-methyl-D-erythritol from CTP and 2-C-methyl-D-erythritol 4-phosphate (MEP). In Bacillus cereus (strain ATCC 14579 / DSM 31 / CCUG 7414 / JCM 2152 / NBRC 15305 / NCIMB 9373 / NCTC 2599 / NRRL B-3711), this protein is 2-C-methyl-D-erythritol 4-phosphate cytidylyltransferase.